Reading from the N-terminus, the 398-residue chain is 1-deoxy-D-xylulose 5-phosphate reductoisomerase (398 aa).

Threonine 10, glycine 11, serine 12, isoleucine 13, glycine 36, arginine 37, asparagine 38, and asparagine 124 together coordinate NADPH. A 1-deoxy-D-xylulose 5-phosphate-binding site is contributed by lysine 125. Glutamate 126 provides a ligand contact to NADPH. Aspartate 150 is a binding site for Mn(2+). Residues serine 151, glutamate 152, serine 186, and histidine 209 each contribute to the 1-deoxy-D-xylulose 5-phosphate site. Mn(2+) is bound at residue glutamate 152. Glycine 215 is an NADPH binding site. Serine 222, asparagine 227, lysine 228, and glutamate 231 together coordinate 1-deoxy-D-xylulose 5-phosphate. Mn(2+) is bound at residue glutamate 231.

It belongs to the DXR family. Homodimer. The cofactor is Mg(2+). Requires Mn(2+) as cofactor.

It carries out the reaction 2-C-methyl-D-erythritol 4-phosphate + NADP(+) = 1-deoxy-D-xylulose 5-phosphate + NADPH + H(+). It participates in isoprenoid biosynthesis; isopentenyl diphosphate biosynthesis via DXP pathway; isopentenyl diphosphate from 1-deoxy-D-xylulose 5-phosphate: step 1/6. Catalyzes the NADPH-dependent rearrangement and reduction of 1-deoxy-D-xylulose-5-phosphate (DXP) to 2-C-methyl-D-erythritol 4-phosphate (MEP). This chain is 1-deoxy-D-xylulose 5-phosphate reductoisomerase, found in Yersinia enterocolitica serotype O:8 / biotype 1B (strain NCTC 13174 / 8081).